The following is a 464-amino-acid chain: Protein btn-1 (464 aa).

The signal sequence occupies residues Met-1–Ala-22. A run of 10 helical transmembrane segments spans residues Ala-38 to Leu-58, Val-73 to Ile-93, Ile-102 to Ser-122, Leu-129 to Leu-149, Gly-167 to Val-187, Ser-190 to Pro-210, Ser-288 to Asn-308, Pro-332 to Ile-352, Ile-354 to His-374, and Leu-376 to Leu-396.

This sequence belongs to the battenin family.

It is found in the vacuole membrane. Involved in vacuolar transport and vacuole pH homeostasis. Also required for cytokinesis. This chain is Protein btn-1 (cln3), found in Neurospora crassa (strain ATCC 24698 / 74-OR23-1A / CBS 708.71 / DSM 1257 / FGSC 987).